The chain runs to 428 residues: Divergent protein kinase domain 1A (428 aa).

Over 1–27 (MARGLFSRAWLSKTHHFQARLSYIRVK) the chain is Cytoplasmic. The chain crosses the membrane as a helical span at residues 28–48 (YLFLTWLAVFVSSWVVYVQYS). Over 49–428 (TYTELCRGRE…WKQISHTTDS (380 aa)) the chain is Lumenal.

It belongs to the DIPK family. Post-translationally, among the many cysteines in the lumenal domain, most are probably involved in disulfide bonds.

The protein localises to the endoplasmic reticulum membrane. The protein is Divergent protein kinase domain 1A (dipk1a) of Danio rerio (Zebrafish).